Consider the following 634-residue polypeptide: Fluorothreonine transaldolase (634 aa).

Pyridoxal 5'-phosphate is bound by residues Tyr-67, His-221, and His-247. Lys-248 bears the N6-(pyridoxal phosphate)lysine mark. Residue Arg-375 participates in pyridoxal 5'-phosphate binding. A disordered region spans residues 428–456; sequence TGDPASAAGPPARERYAPPTAPAGHPARP.

The protein belongs to the SHMT family. The cofactor is pyridoxal 5'-phosphate.

It catalyses the reaction fluoroacetaldehyde + L-threonine = 4-fluoro-L-threonine + acetaldehyde. In terms of biological role, transaldolase that catalyzes the final step in 4-fluorothreonine biosynthesis. Mediates a L-threonine/fluoroaceldehyde to 4-fluoro-L-threonine/acetaldehyde crossover reaction. Can also convert chloroacetaldehyde into 4-chloro-L-threonine. Does not use glycine as a substrate. In Streptantibioticus cattleyicolor (Streptomyces cattleya), this protein is Fluorothreonine transaldolase.